The following is a 311-amino-acid chain: Aspartate carbamoyltransferase catalytic subunit (311 aa).

Carbamoyl phosphate contacts are provided by arginine 55 and threonine 56. Position 85 (lysine 85) interacts with L-aspartate. Residues arginine 106, histidine 135, and glutamine 138 each coordinate carbamoyl phosphate. Residues arginine 168 and arginine 230 each contribute to the L-aspartate site. The carbamoyl phosphate site is built by leucine 268 and proline 269.

Belongs to the aspartate/ornithine carbamoyltransferase superfamily. ATCase family. In terms of assembly, heterododecamer (2C3:3R2) of six catalytic PyrB chains organized as two trimers (C3), and six regulatory PyrI chains organized as three dimers (R2).

The enzyme catalyses carbamoyl phosphate + L-aspartate = N-carbamoyl-L-aspartate + phosphate + H(+). Its pathway is pyrimidine metabolism; UMP biosynthesis via de novo pathway; (S)-dihydroorotate from bicarbonate: step 2/3. Its function is as follows. Catalyzes the condensation of carbamoyl phosphate and aspartate to form carbamoyl aspartate and inorganic phosphate, the committed step in the de novo pyrimidine nucleotide biosynthesis pathway. The polypeptide is Aspartate carbamoyltransferase catalytic subunit (Citrobacter koseri (strain ATCC BAA-895 / CDC 4225-83 / SGSC4696)).